The following is a 389-amino-acid chain: Chalcone synthase 1 (389 aa).

Cys164 is a catalytic residue.

This sequence belongs to the thiolase-like superfamily. Chalcone/stilbene synthases family.

It carries out the reaction (E)-4-coumaroyl-CoA + 3 malonyl-CoA + 3 H(+) = 2',4,4',6'-tetrahydroxychalcone + 3 CO2 + 4 CoA. It functions in the pathway secondary metabolite biosynthesis; flavonoid biosynthesis. Its function is as follows. The primary product of this enzyme is 4,2',4',6'-tetrahydroxychalcone (also termed naringenin-chalcone or chalcone) which can under specific conditions spontaneously isomerize into naringenin. This is Chalcone synthase 1 (CHS1) from Medicago sativa (Alfalfa).